A 188-amino-acid polypeptide reads, in one-letter code: V-type proton ATPase subunit E (188 aa).

It belongs to the V-ATPase E subunit family.

Produces ATP from ADP in the presence of a proton gradient across the membrane. The polypeptide is V-type proton ATPase subunit E (Dictyoglomus thermophilum (strain ATCC 35947 / DSM 3960 / H-6-12)).